The sequence spans 125 residues: Fluoride-specific ion channel FluC (125 aa).

Transmembrane regions (helical) follow at residues 5–25 (ILAI…LALW), 37–57 (LAAN…FHLL), 71–91 (GFLG…TMLL), and 97–117 (VALL…WLGI). Positions 74 and 77 each coordinate Na(+).

This sequence belongs to the fluoride channel Fluc/FEX (TC 1.A.43) family.

The protein resides in the cell inner membrane. It catalyses the reaction fluoride(in) = fluoride(out). Na(+) is not transported, but it plays an essential structural role and its presence is essential for fluoride channel function. Its function is as follows. Fluoride-specific ion channel. Important for reducing fluoride concentration in the cell, thus reducing its toxicity. The chain is Fluoride-specific ion channel FluC from Variovorax paradoxus (strain S110).